The primary structure comprises 198 residues: GTP cyclohydrolase-2 (198 aa).

A GTP-binding site is contributed by R52–E56. C57, C68, and C70 together coordinate Zn(2+). Residues Q73, E94–R96, and T116 each bind GTP. The Proton acceptor role is filled by D128. R130 acts as the Nucleophile in catalysis. GTP-binding residues include T151 and K156.

This sequence belongs to the GTP cyclohydrolase II family. Zn(2+) serves as cofactor.

The catalysed reaction is GTP + 4 H2O = 2,5-diamino-6-hydroxy-4-(5-phosphoribosylamino)-pyrimidine + formate + 2 phosphate + 3 H(+). It functions in the pathway cofactor biosynthesis; riboflavin biosynthesis; 5-amino-6-(D-ribitylamino)uracil from GTP: step 1/4. Its function is as follows. Catalyzes the conversion of GTP to 2,5-diamino-6-ribosylamino-4(3H)-pyrimidinone 5'-phosphate (DARP), formate and pyrophosphate. This is GTP cyclohydrolase-2 from Vibrio vulnificus (strain CMCP6).